Reading from the N-terminus, the 570-residue chain is GTPase Obg (570 aa).

The region spanning 2–168 (SDFVDRVTVH…RDIILELKSI (167 aa)) is the Obg domain. The tract at residues 15–43 (GDGGNGSAGIRREKYKPLAGPNGGNGGKG) is disordered. Residues 169–349 (ADVALVGFPS…LNFALAKLVK (181 aa)) enclose the OBG-type G domain. GTP is bound by residues 175–182 (GFPSAGKS), 200–204 (FTTLV), 221–224 (DVPG), 301–304 (NKID), and 330–332 (STA). The Mg(2+) site is built by Ser-182 and Thr-202. One can recognise an OCT domain in the interval 382–468 (GRNAQVREFE…ERAVAFDWDP (87 aa)). Residues 521–570 (RAAMQAERAAGHWADPSIDDDRHDEQSLFGRGEVEEYEDEPGADGSRQLD) are disordered.

It belongs to the TRAFAC class OBG-HflX-like GTPase superfamily. OBG GTPase family. As to quaternary structure, monomer. It depends on Mg(2+) as a cofactor.

It localises to the cytoplasm. Its function is as follows. An essential GTPase which binds GTP, GDP and possibly (p)ppGpp with moderate affinity, with high nucleotide exchange rates and a fairly low GTP hydrolysis rate. Plays a role in control of the cell cycle, stress response, ribosome biogenesis and in those bacteria that undergo differentiation, in morphogenesis control. The chain is GTPase Obg from Bifidobacterium animalis subsp. lactis (strain AD011).